Here is a 527-residue protein sequence, read N- to C-terminus: T-complex protein 1 subunit beta (527 aa).

Belongs to the TCP-1 chaperonin family. In terms of assembly, heterooligomeric complex of about 850 to 900 kDa that forms two stacked rings, 12 to 16 nm in diameter.

The protein resides in the cytoplasm. Molecular chaperone; assists the folding of proteins upon ATP hydrolysis. Known to play a role, in vitro, in the folding of actin and tubulin. The sequence is that of T-complex protein 1 subunit beta from Arabidopsis thaliana (Mouse-ear cress).